The primary structure comprises 1985 residues: Voltage-dependent L-type calcium channel subunit alpha-1F (1985 aa).

A compositionally biased stretch (basic and acidic residues) spans 1 to 11; the sequence is MSESEVGKDTT. Residues 1–56 form a disordered region; that stretch reads MSESEVGKDTTPEPSPANGTGPGPEWGLCPGPPTVGTDTSGASGLGTPRRRTQHNK. Residues 1-92 lie on the Cytoplasmic side of the membrane; it reads MSESEVGKDT…RSCISIVEWK (92 aa). Residues 79–375 form an I repeat; the sequence is NPIRRSCISI…LVLGVLSGEF (297 aa). The chain crosses the membrane as a helical span at residues 93–111; sequence PFDILILLTIFANCVALGV. The Extracellular portion of the chain corresponds to 112 to 129; it reads YIPFPEDDSNTANHNLEQ. A helical transmembrane segment spans residues 130–149; the sequence is VEYVFLVIFTVETVLKIVAY. Residues 150-161 lie on the Cytoplasmic side of the membrane; sequence GLVLHPSAYIRN. A helical membrane pass occupies residues 162-180; that stretch reads GWNLLDFIIVVVGLFSVLL. Topologically, residues 181–201 are extracellular; sequence EQGPGRPGDAPHTGGKPGGFD. The chain crosses the membrane as a helical span at residues 202 to 220; that stretch reads VKALRAFRVLRPLRLVSGV. The Cytoplasmic portion of the chain corresponds to 221–239; sequence PSLHIVVNSIMKALVPLLH. Residues 240 to 259 traverse the membrane as a helical segment; the sequence is IALLVLFVIIIYAIIGLELF. Residues 260–347 lie on the Extracellular side of the membrane; sequence LGRMHKTCYF…WMQDAMGYEL (88 aa). Residue N295 is glycosylated (N-linked (GlcNAc...) asparagine). E330 is a binding site for Ca(2+). A helical membrane pass occupies residues 348-372; it reads PWVYFVSLVIFGSFFVLNLVLGVLS. At 373–529 the chain is on the cytoplasmic side; sequence GEFSKEREKA…ARCRRAVKSN (157 aa). The tract at residues 395-412 is binding to the beta subunit; the sequence is QQMEEDLRGYLDWITQAE. Low complexity predominate over residues 455–469; sequence SHSTRSTHSTSSHAS. Residues 455–490 are disordered; that stretch reads SHSTRSTHSTSSHASLPASDTGSMTDTPGDEDEEEG. Residues 515–761 form an II repeat; sequence NRGLRARCRR…VFLAIAVDNL (247 aa). A helical membrane pass occupies residues 530-549; sequence ACYWAVLLLVFLNTLTIASE. The Extracellular portion of the chain corresponds to 550-564; that stretch reads HHGQPLWLTQTQEYA. A helical transmembrane segment spans residues 565–583; the sequence is NKVLLCLFTVEMLLKLYGL. Residues 584 to 591 are Cytoplasmic-facing; sequence GPSVYVAS. The helical transmembrane segment at 592–610 threads the bilayer; it reads FFNRFDCFVVCGGILETTL. Over 611 to 620 the chain is Extracellular; the sequence is VEVGAMQPLG. A helical membrane pass occupies residues 621–639; sequence ISVLRCVRLLRIFKVTRHW. Over 640–658 the chain is Cytoplasmic; the sequence is ASLSNLVASLLNSMKSIAS. A helical membrane pass occupies residues 659–679; the sequence is LLLLLFLFIIIFSLLGMQLFG. The Extracellular portion of the chain corresponds to 680–733; it reads GKFNFDQTHTKRSTFDTFPQALLTVFQILTGEDWNVVMYDGIMAYGGPFFPGML. Residue E711 participates in Ca(2+) binding. The helical transmembrane segment at 734-758 threads the bilayer; the sequence is VCVYFIILFICGNYILLNVFLAIAV. Residues 759–876 lie on the Cytoplasmic side of the membrane; the sequence is DNLASGDAGT…KACHTLIHHH (118 aa). The segment at 766-834 is disordered; that stretch reads AGTAKDKGRE…EEEEENGAGH (69 aa). The segment covering 768–787 has biased composition (basic and acidic residues); the sequence is TAKDKGREKSSEGNPPKENK. Over residues 810–830 the composition is skewed to acidic residues; sequence MEEEEEEEEEEEEEEEEEEEN. An III repeat occupies 858–1140; sequence CLSQTNPLRK…FFMMNIFVGF (283 aa). The chain crosses the membrane as a helical span at residues 877–895; it reads IFTSLILVFIILSSVSLAA. Over 896-911 the chain is Extracellular; the sequence is EDPIRAHSFRNHILGY. Residues 912-931 form a helical membrane-spanning segment; that stretch reads FDYAFTSIFTVEILLKMTVF. Over 932–943 the chain is Cytoplasmic; it reads GAFLHRGSFCRS. Residues 944–962 traverse the membrane as a helical segment; sequence WFNLLDLLVVSVSLISFGI. The Extracellular portion of the chain corresponds to 963–968; the sequence is HSSAIS. Residues 969–988 form a helical membrane-spanning segment; it reads VVKILRVLRVLRPLRAINRA. Topologically, residues 989–1007 are cytoplasmic; that stretch reads KGLKHVVQCVFVAIRTIGN. Residues 1008–1027 traverse the membrane as a helical segment; that stretch reads IMIVTTLLQFMFACIGVQLF. The Extracellular segment spans residues 1028 to 1117; the sequence is KGKFYSCTDE…EGPIYNYHVE (90 aa). Residues 1065–1155 form a dihydropyridine binding region; that stretch reads RLWVNSDFNF…RAQGEQEYQN (91 aa). E1091 is a Ca(2+) binding site. A helical membrane pass occupies residues 1118–1138; that stretch reads ISVFFIVYIIIIAFFMMNIFV. Over 1139–1195 the chain is Cytoplasmic; it reads GFVIITFRAQGEQEYQNCELDKNQRQCVEYALKAQPLRRYIPKNPHQYRVWATVNSR. Residues 1182–1449 form an IV repeat; sequence NPHQYRVWAT…LFVAVIMDNF (268 aa). Residues 1196-1214 form a helical membrane-spanning segment; the sequence is AFEYLMFLLILLNTVALAM. Over 1215–1229 the chain is Extracellular; it reads QHYEQTAPFNYAMDI. The chain crosses the membrane as a helical span at residues 1230–1249; the sequence is LNMVFTGLFTIEMVLKIIAF. Residues 1250-1256 are Cytoplasmic-facing; that stretch reads KPKHYFA. Residues 1257–1278 form a helical membrane-spanning segment; the sequence is DAWNTFDALIVVGSVVDIAVTE. Residues 1279–1295 lie on the Extracellular side of the membrane; sequence VNNGGHLGESSEDTSRI. Residues 1296-1315 traverse the membrane as a helical segment; sequence SITFFRLFRVMRLVKLLSKG. Topologically, residues 1316–1334 are cytoplasmic; the sequence is EGIRTLLWTFIKSFQALPY. The helical transmembrane segment at 1335 to 1354 threads the bilayer; that stretch reads VALLIAMIFFIYAVIGMQMF. The Extracellular portion of the chain corresponds to 1355-1421; that stretch reads GLVALQDGTQ…GEEFTCGSSF (67 aa). A dihydropyridine binding region spans residues 1402–1468; it reads RCDPESDFGP…LGPHHLDEFK (67 aa). Residues 1414–1457 are phenylalkylamine binding; it reads EFTCGSSFAIVYFISFFMLCAFLIINLFVAVIMDNFDYLTRDWS. Residues 1422–1446 form a helical membrane-spanning segment; it reads AIVYFISFFMLCAFLIINLFVAVIM. The Cytoplasmic segment spans residues 1447-1982; that stretch reads DNFDYLTRDW…EDLGDEMACV (536 aa). Disordered regions lie at residues 1643–1729 and 1746–1778; these read VTEE…PHRR and LKGT…SFEP. The segment covering 1644–1665 has biased composition (acidic residues); it reads TEEEEEEEEAVGQEAEEEEAEN. Polar residues-rich tracts occupy residues 1675 to 1687 and 1713 to 1724; these read DSQP…SRIS and NSRQPSVIQAGS. Positions 1767 to 1776 are enriched in basic and acidic residues; sequence DLDRAGRDSF.

It belongs to the calcium channel alpha-1 subunit (TC 1.A.1.11) family. CACNA1F subfamily. Voltage-dependent calcium channels are multisubunit complexes, consisting of alpha-1, alpha-2, beta and delta subunits in a 1:1:1:1 ratio. The channel activity is directed by the pore-forming and voltage-sensitive alpha-1 subunit. In many cases, this subunit is sufficient to generate voltage-sensitive calcium channel activity. The auxiliary subunits beta and alpha-2/delta linked by a disulfide bridge regulate the channel activity. Interacts (via IQ domain) with CABP4; in a calcium independent manner. Expressed in the inner and outer nuclear layers and the genglion cell layer of the retina.

It is found in the membrane. The enzyme catalyses Ca(2+)(in) = Ca(2+)(out). Voltage-sensitive calcium channels (VSCC) mediate the entry of calcium ions into excitable cells and are also involved in a variety of calcium-dependent processes, including muscle contraction, hormone or neurotransmitter release, gene expression, cell motility, cell division and cell death. The isoform alpha-1F gives rise to L-type calcium currents. Long-lasting (L-type) calcium channels belong to the 'high-voltage activated' (HVA) group. They are blocked by dihydropyridines (DHP), phenylalkylamines, and by benzothiazepines. Activates at more negative voltages and does not undergo calcium-dependent inactivation (CDI), due to incoming calcium ions, during depolarization. The polypeptide is Voltage-dependent L-type calcium channel subunit alpha-1F (Mus musculus (Mouse)).